Here is a 342-residue protein sequence, read N- to C-terminus: Anthranilate phosphoribosyltransferase (342 aa).

5-phospho-alpha-D-ribose 1-diphosphate contacts are provided by residues Gly-79, Gly-82–Asp-83, Thr-87, Asn-89–Thr-92, Lys-107–Ser-115, and Ser-119. Position 79 (Gly-79) interacts with anthranilate. A Mg(2+)-binding site is contributed by Ser-91. Asn-110 provides a ligand contact to anthranilate. Arg-165 serves as a coordination point for anthranilate. Mg(2+) contacts are provided by Asp-223 and Glu-224.

Belongs to the anthranilate phosphoribosyltransferase family. Homodimer. The cofactor is Mg(2+).

It carries out the reaction N-(5-phospho-beta-D-ribosyl)anthranilate + diphosphate = 5-phospho-alpha-D-ribose 1-diphosphate + anthranilate. The protein operates within amino-acid biosynthesis; L-tryptophan biosynthesis; L-tryptophan from chorismate: step 2/5. In terms of biological role, catalyzes the transfer of the phosphoribosyl group of 5-phosphorylribose-1-pyrophosphate (PRPP) to anthranilate to yield N-(5'-phosphoribosyl)-anthranilate (PRA). In Aeromonas hydrophila subsp. hydrophila (strain ATCC 7966 / DSM 30187 / BCRC 13018 / CCUG 14551 / JCM 1027 / KCTC 2358 / NCIMB 9240 / NCTC 8049), this protein is Anthranilate phosphoribosyltransferase.